We begin with the raw amino-acid sequence, 90 residues long: Small ribosomal subunit protein bS16 (90 aa).

The protein belongs to the bacterial ribosomal protein bS16 family.

This Lactococcus lactis subsp. lactis (strain IL1403) (Streptococcus lactis) protein is Small ribosomal subunit protein bS16.